A 222-amino-acid chain; its full sequence is Transcriptional regulatory protein BasR (222 aa).

The 115-residue stretch at 2 to 116 folds into the Response regulatory domain; the sequence is KILIVEDDTL…ELHARIRALL (115 aa). Asp-51 carries the 4-aspartylphosphate modification. The ompR/PhoB-type DNA-binding region spans 124-218; sequence ESELIVGNLT…VRGFGYMLVA (95 aa).

Homodimer. In terms of processing, phosphorylated by BasS.

It localises to the cytoplasm. Its function is as follows. Member of the two-component regulatory system BasS/BasR. BasR induces the transcription of the ugd, ais, arnBCADTEF and eptA-basRS loci, all involved in resistance to polymyxin. The sequence is that of Transcriptional regulatory protein BasR (basR) from Escherichia coli (strain K12).